Reading from the N-terminus, the 483-residue chain is Siroheme synthase (483 aa).

Residues 1-203 (MNYFPIFANL…RQNTLAEREL (203 aa)) are precorrin-2 dehydrogenase /sirohydrochlorin ferrochelatase. NAD(+)-binding positions include 22-23 (AV) and 43-44 (KH). Ser-128 is subject to Phosphoserine. A uroporphyrinogen-III C-methyltransferase region spans residues 217–483 (GSVSLVGAGP…GGLNAGQRAA (267 aa)). Pro-226 contacts S-adenosyl-L-methionine. Catalysis depends on Asp-249, which acts as the Proton acceptor. Catalysis depends on Lys-271, which acts as the Proton donor. Residues 302 to 304 (GGD), Val-307, 332 to 333 (TA), Met-384, and Gly-413 contribute to the S-adenosyl-L-methionine site.

It in the N-terminal section; belongs to the precorrin-2 dehydrogenase / sirohydrochlorin ferrochelatase family. This sequence in the C-terminal section; belongs to the precorrin methyltransferase family.

The enzyme catalyses uroporphyrinogen III + 2 S-adenosyl-L-methionine = precorrin-2 + 2 S-adenosyl-L-homocysteine + H(+). It carries out the reaction precorrin-2 + NAD(+) = sirohydrochlorin + NADH + 2 H(+). The catalysed reaction is siroheme + 2 H(+) = sirohydrochlorin + Fe(2+). The protein operates within cofactor biosynthesis; adenosylcobalamin biosynthesis; precorrin-2 from uroporphyrinogen III: step 1/1. It participates in cofactor biosynthesis; adenosylcobalamin biosynthesis; sirohydrochlorin from precorrin-2: step 1/1. Its pathway is porphyrin-containing compound metabolism; siroheme biosynthesis; precorrin-2 from uroporphyrinogen III: step 1/1. It functions in the pathway porphyrin-containing compound metabolism; siroheme biosynthesis; siroheme from sirohydrochlorin: step 1/1. The protein operates within porphyrin-containing compound metabolism; siroheme biosynthesis; sirohydrochlorin from precorrin-2: step 1/1. Multifunctional enzyme that catalyzes the SAM-dependent methylations of uroporphyrinogen III at position C-2 and C-7 to form precorrin-2 via precorrin-1. Then it catalyzes the NAD-dependent ring dehydrogenation of precorrin-2 to yield sirohydrochlorin. Finally, it catalyzes the ferrochelation of sirohydrochlorin to yield siroheme. This is Siroheme synthase from Neisseria meningitidis serogroup B (strain ATCC BAA-335 / MC58).